The chain runs to 166 residues: Probable tyrosine-protein phosphatase DG1060 (166 aa).

In terms of domain architecture, Tyrosine-protein phosphatase spans 9 to 162; that stretch reads NFGMVADDLY…LVTYNNAPQW (154 aa). Cys-101 (phosphocysteine intermediate) is an active-site residue.

Belongs to the protein-tyrosine phosphatase family.

The protein resides in the cytoplasm. The enzyme catalyses O-phospho-L-tyrosyl-[protein] + H2O = L-tyrosyl-[protein] + phosphate. The chain is Probable tyrosine-protein phosphatase DG1060 (DG1060) from Dictyostelium discoideum (Social amoeba).